The chain runs to 373 residues: Peroxisomal biogenesis factor 3 (373 aa).

The Cytoplasmic segment spans residues 1 to 15; that stretch reads MLRSMWNFLKRHKKK. The tract at residues 1 to 45 is targeting to peroxisomes; it reads MLRSMWNFLKRHKKKCIFLGTVLGGVYILGKYGQKKIREIQEREA. A helical transmembrane segment spans residues 16 to 36; that stretch reads CIFLGTVLGGVYILGKYGQKK. Topologically, residues 37–116 are peroxisomal; the sequence is IREIQEREAA…LKIISFTRSI (80 aa). Residues 117–140 traverse the membrane as a helical segment; the sequence is VAVYSTCMLVVLLRVQLNIIGGYI. The interaction with PEX19 stretch occupies residues 120 to 136; sequence YSTCMLVVLLRVQLNII. Residues 141 to 373 lie on the Cytoplasmic side of the membrane; sequence YLDNATVGKN…AFSTPQQLEK (233 aa).

Belongs to the peroxin-3 family. Interacts with PEX19.

It localises to the peroxisome membrane. Involved in peroxisome biosynthesis and integrity. Assembles membrane vesicles before the matrix proteins are translocated. As a docking factor for PEX19, is necessary for the import of peroxisomal membrane proteins in the peroxisomes. The polypeptide is Peroxisomal biogenesis factor 3 (PEX3) (Cricetulus longicaudatus (Long-tailed dwarf hamster)).